Consider the following 298-residue polypeptide: PYK10-binding protein 1 (298 aa).

An N-acetylalanine modification is found at Ala2. Jacalin-type lectin domains follow at residues 2-142 and 152-295; these read AQKV…YFAP and AKQL…HVRP. Ser20 carries the phosphoserine modification.

Belongs to the jacalin lectin family. As to quaternary structure, component of the PYK10 complex, at least composed of PYK10/BGLU23, BGLU21, BGLU22, JAL22, JAL23, PBP1/JAL30, PBP2/JAL31, JAL32, JAL33, JAL34, JAL35, GLL22 and GLL23. In terms of tissue distribution, expressed exclusively in roots.

Its subcellular location is the cytoplasm. In terms of biological role, inhibitor-type lectin that may regulate the correct polymerization of BGLU23/PYK10 upon tissue damage. Activates BGLU21, BGLU22 and BGLU23. This is PYK10-binding protein 1 (PBP1) from Arabidopsis thaliana (Mouse-ear cress).